The sequence spans 345 residues: Low-density lipoprotein receptor class A domain-containing protein 3 (345 aa).

The signal sequence occupies residues 1-17; it reads MWLLGPLCLLLSSAAES. The Extracellular segment spans residues 18-173; the sequence is QLLPGNNFTN…NQLVYYPSIT (156 aa). Asn-24 carries N-linked (GlcNAc...) asparagine glycosylation. LDL-receptor class A domains lie at 28-65, 70-107, and 112-148; these read ECNI…KECP, KCGP…ENCT, and LCST…ESCE. Intrachain disulfides connect Cys-29–Cys-42, Cys-37–Cys-55, Cys-49–Cys-64, Cys-71–Cys-84, Cys-78–Cys-97, Cys-91–Cys-106, Cys-113–Cys-125, Cys-120–Cys-138, and Cys-132–Cys-147. The tract at residues 30 to 57 is (Microbial infection) Interaction with Venezuelan equine encephalitis virus/VEEV spike proteins E1 and E2; the sequence is NIPGNFMCSNGRCIPGAWQCDGLPDCFD. Residues 174 to 194 form a helical membrane-spanning segment; that stretch reads YAIIGSSVIFVLVVALLALVL. Residues 195 to 345 are Cytoplasmic-facing; it reads HHQRKRNNLM…SEPSQGTEEV (151 aa). 2 consecutive short sequence motifs (involved in ITCH interaction) follow at residues 256-259 and 275-278; these read PPSY and PPPY. The interval 270 to 345 is disordered; it reads WYDLPPPPYS…SEPSQGTEEV (76 aa). Over residues 295-313 the composition is skewed to low complexity; sequence SRSGSANSASSQAASSLLS.

It belongs to the LDLR family. In terms of assembly, interacts with APP precursor C-terminus. Interacts directly with ITCH; this interaction promotes ITCH auto-ubiquitination leading to its degradation. Interacts directly with NEDD4; this interaction promotes NEDD4 auto-ubiquitination. Interacts directly with NEDD4L. As to quaternary structure, (Microbial infection) Interacts (via domain LDL-receptor class A 1) with Venezuelan equine encephalitis virus/VEEV spike proteins E1 and E2. As to expression, expressed at high levels in brain, lung, skeletal muscle, and pancreas. Expressed at moderate levels in heart, placenta, and kidney but not detected in the liver.

It localises to the cell membrane. May influence APP processing, resulting in a decrease in sAPP-alpha production and increased amyloidogenic P3 peptide production. May regulate ITCH and NEDD4 E3 ligase activity and degradation. Its function is as follows. (Microbial infection) Acts as a receptor for Venezuelan equine encephalitis virus. In Homo sapiens (Human), this protein is Low-density lipoprotein receptor class A domain-containing protein 3.